The following is a 186-amino-acid chain: Ribosome-recycling factor (186 aa).

Belongs to the RRF family.

The protein localises to the cytoplasm. Its function is as follows. Responsible for the release of ribosomes from messenger RNA at the termination of protein biosynthesis. May increase the efficiency of translation by recycling ribosomes from one round of translation to another. In Nitratiruptor sp. (strain SB155-2), this protein is Ribosome-recycling factor.